The following is a 158-amino-acid chain: MNQFTHINTNGEANMVDVSMKQETVRVARAEAFVSMNAETLQMIISGNHHKGDVFATARIAGIQAAKRTWELIPLCHPLLLSKVEVQLEALPETNQVRIESLCKLTGKTGVEMEALTAASVAALTIYDMCKAVQKDMVIENVRLLHKSGGKSGEFNAE.

Substrate contacts are provided by residues Leu75 to His77 and Met113 to Glu114. Asp128 is an active-site residue.

This sequence belongs to the MoaC family. In terms of assembly, homohexamer; trimer of dimers.

The catalysed reaction is (8S)-3',8-cyclo-7,8-dihydroguanosine 5'-triphosphate = cyclic pyranopterin phosphate + diphosphate. It functions in the pathway cofactor biosynthesis; molybdopterin biosynthesis. In terms of biological role, catalyzes the conversion of (8S)-3',8-cyclo-7,8-dihydroguanosine 5'-triphosphate to cyclic pyranopterin monophosphate (cPMP). The protein is Cyclic pyranopterin monophosphate synthase of Actinobacillus pleuropneumoniae serotype 5b (strain L20).